The sequence spans 162 residues: MTSGGKSKGVGSEPGVRVIAENRRARFDYTVDEKVEAGLALTGSEVKSLRDGIANLSDAYALPKGDELFLLNANIGSYKAASFFDHLPTRGRKLLMHRGEIDRWTAKVRERGYSIIPLVLYFRNGRAKVELGLCRGKTHEDRRHDIKERETKREMDRAMRRR.

Positions 140-162 (EDRRHDIKERETKREMDRAMRRR) are disordered.

Belongs to the SmpB family.

It is found in the cytoplasm. Functionally, required for rescue of stalled ribosomes mediated by trans-translation. Binds to transfer-messenger RNA (tmRNA), required for stable association of tmRNA with ribosomes. tmRNA and SmpB together mimic tRNA shape, replacing the anticodon stem-loop with SmpB. tmRNA is encoded by the ssrA gene; the 2 termini fold to resemble tRNA(Ala) and it encodes a 'tag peptide', a short internal open reading frame. During trans-translation Ala-aminoacylated tmRNA acts like a tRNA, entering the A-site of stalled ribosomes, displacing the stalled mRNA. The ribosome then switches to translate the ORF on the tmRNA; the nascent peptide is terminated with the 'tag peptide' encoded by the tmRNA and targeted for degradation. The ribosome is freed to recommence translation, which seems to be the essential function of trans-translation. This Myxococcus xanthus (strain DK1622) protein is SsrA-binding protein.